The sequence spans 661 residues: Chermesin D/asnovolin J monooxidase nvfH (661 aa).

N-linked (GlcNAc...) asparagine glycosylation is present at asparagine 12. A helical membrane pass occupies residues 89-111 (VLIIGAGYGGLLFAVRIIQTGAF). FAD-binding positions include 128–131 (TWYW), 140–141 (DV), and tyrosine 146. 138–140 (MCD) serves as a coordination point for NADP(+). Residues 286-292 (TGATAIQ) and 309-310 (RT) contribute to the NADP(+) site. Residues asparagine 382 and asparagine 538 are each glycosylated (N-linked (GlcNAc...) asparagine).

Belongs to the FAD-binding monooxygenase family. The cofactor is FAD.

The protein resides in the membrane. The catalysed reaction is chermesin D + AH2 + O2 = asnovolin I + A + H2O. The enzyme catalyses asnovolin J + AH2 + O2 = asnovolin A + A + H2O. It participates in secondary metabolite biosynthesis; terpenoid biosynthesis. Its function is as follows. Chermesin D/asnovolin J monooxidase; part of the gene cluster that mediates the biosynthesis of novofumigatonin, a heavily oxygenated meroterpenoid containing a unique orthoester moiety. The first step of the pathway is the synthesis of 3,5-dimethylorsellinic acid (DMOA) by the polyketide synthase nvfA via condensation of one acetyl-CoA starter unit with 3 malonyl-CoA units and 2 methylations. DMOA is then converted to farnesyl-DMOA by the farnesyltransferase nvfB. Epoxydation by FAD-dependent monooxygenase nvfK, followed by a protonation-initiated cyclization catalyzed by the terpene cyclase nvfL leads to the production of asnavolin H. The short chain dehydrogenase nvfC then as a 3-OH dehydrogenase of asnovolin H to yield chemesin D. There are two branches to synthesize asnovolin A from chemesin D. In one branch, chemesin D undergoes Baeyer-Villiger oxidation by nvfH, methylation by nvfJ, and enoyl reduction by the nvfM D enoylreductase that reduces the double bond between C-5'and C-6', to form respectively asnovolin I, asnovolin K, and asnovolin A. In the other branch, the methylation precedes the Baeyer-Villiger oxidation and the enoyl reduction to yield asnovolin A via the asnovolin J intermediate. Asnovolin A is further converted to fumigatonoid A by the Fe(II)/2-oxoglutarate-dependent dioxygenase nvfI that catalyzes an endoperoxidation reaction. The alpha/beta hydrolase nvfD then acts as an epimerase that converts fumigatonoid A to its C-5' epimer, which then undergoes spontaneous or nvfD-catalyzed lactonization. The following step utilizes the ketoreductase nvfG to produce fumigatonoid B. The dioxygenase nvfE further converts fumigatonoid B into fumigatonoid C. Finally the Fe(II)/2-oxoglutarate-dependent dioxygenase nvfF catalyzes two rounds of oxidation to transform fumigatonoid C into the end product, novofumigatonin A. This chain is Chermesin D/asnovolin J monooxidase nvfH, found in Aspergillus novofumigatus (strain IBT 16806).